Here is a 449-residue protein sequence, read N- to C-terminus: GTPase Der (449 aa).

EngA-type G domains follow at residues 3 to 167 (SIVA…PDEP) and 175 to 350 (TNIA…EQYS). GTP is bound by residues 9 to 16 (GRPNVGKS), 56 to 60 (DTGGF), 119 to 122 (NKVD), 181 to 188 (GRPNVGKS), 228 to 232 (DTAGI), and 293 to 296 (NKWD). The region spanning 351 to 435 (RRVTTSELNR…PFRLLFRGRE (85 aa)) is the KH-like domain.

The protein belongs to the TRAFAC class TrmE-Era-EngA-EngB-Septin-like GTPase superfamily. EngA (Der) GTPase family. In terms of assembly, associates with the 50S ribosomal subunit.

Functionally, GTPase that plays an essential role in the late steps of ribosome biogenesis. In Trichlorobacter lovleyi (strain ATCC BAA-1151 / DSM 17278 / SZ) (Geobacter lovleyi), this protein is GTPase Der.